The primary structure comprises 258 residues: Pyridoxine 5'-phosphate synthase (258 aa).

Asparagine 6 is a binding site for 3-amino-2-oxopropyl phosphate. 8–9 (DH) contributes to the 1-deoxy-D-xylulose 5-phosphate binding site. 3-amino-2-oxopropyl phosphate is bound at residue arginine 17. The active-site Proton acceptor is the histidine 42. 1-deoxy-D-xylulose 5-phosphate is bound by residues arginine 44 and histidine 49. Glutamate 69 functions as the Proton acceptor in the catalytic mechanism. Residue threonine 99 coordinates 1-deoxy-D-xylulose 5-phosphate. The Proton donor role is filled by histidine 213. 3-amino-2-oxopropyl phosphate is bound by residues glycine 214 and 235-236 (GQ).

It belongs to the PNP synthase family. As to quaternary structure, homooctamer; tetramer of dimers.

The protein resides in the cytoplasm. It catalyses the reaction 3-amino-2-oxopropyl phosphate + 1-deoxy-D-xylulose 5-phosphate = pyridoxine 5'-phosphate + phosphate + 2 H2O + H(+). It participates in cofactor biosynthesis; pyridoxine 5'-phosphate biosynthesis; pyridoxine 5'-phosphate from D-erythrose 4-phosphate: step 5/5. Functionally, catalyzes the complicated ring closure reaction between the two acyclic compounds 1-deoxy-D-xylulose-5-phosphate (DXP) and 3-amino-2-oxopropyl phosphate (1-amino-acetone-3-phosphate or AAP) to form pyridoxine 5'-phosphate (PNP) and inorganic phosphate. The sequence is that of Pyridoxine 5'-phosphate synthase from Sulfurovum sp. (strain NBC37-1).